We begin with the raw amino-acid sequence, 976 residues long: Probable basic-leucine zipper transcription factor Q (976 aa).

Coiled-coil stretches lie at residues 57 to 110 (AIDS…QYQQ) and 136 to 287 (QQQQ…QQQQ). The disordered stretch occupies residues 104-128 (YQQQYQQPYTTPSPPDQIDYNQQLS). 2 stretches are compositionally biased toward polar residues: residues 374–385 (TNFNGTNNSTPN) and 393–411 (KLSS…SPPS). A disordered region spans residues 374-499 (TNFNGTNNST…PIDSNGDFDL (126 aa)). Composition is skewed to low complexity over residues 420–468 (PKNN…FNNN) and 476–490 (STTT…MTSP). The region spanning 504-567 (EKKKSISRIN…GVEVMRPEPE (64 aa)) is the bZIP domain. Residues 505–507 (KKK) are basic motif. The segment at 509 to 516 (ISRINQNL) is leucine-zipper. Residues 855 to 938 (ENQSNNFGNN…VNSNNNNFNN (84 aa)) show a composition bias toward low complexity. Residues 855 to 957 (ENQSNNFGNN…SADAIPYPST (103 aa)) form a disordered region.

This sequence belongs to the bZIP family.

It localises to the nucleus. Its function is as follows. Probable transcriptional regulator. The chain is Probable basic-leucine zipper transcription factor Q (bzpQ) from Dictyostelium discoideum (Social amoeba).